The primary structure comprises 389 residues: Cytochrome oxidase assembly protein SHY1 (389 aa).

Topologically, residues 1–71 are mitochondrial matrix; sequence MSLLGARSTY…SRRERSFGKK (71 aa). Residues 72–92 form a helical membrane-spanning segment; sequence IVLGLMFAMPIISFYLGTWQV. Residues 93-341 lie on the Mitochondrial intermembrane side of the membrane; it reads RRLKWKTKLI…KPTIDLKNNH (249 aa). The disordered stretch occupies residues 292–311; sequence GTQAVDNNTSKPRSRQEMPT. Residues 342–362 form a helical membrane-spanning segment; it reads LQYLVTWYGLSFLSTIFLIVA. At 363–389 the chain is on the mitochondrial matrix side; the sequence is LRKAKRGGVVSQDQLMKEKLKHSRKYM.

This sequence belongs to the SURF1 family. In terms of assembly, interacts with COA1, COX14 and MSS51.

It is found in the mitochondrion inner membrane. Its function is as follows. Required for efficient assembly of cytochrome c oxidase in the mitochondrial inner membrane. Involved in a step that couples MSS51-COX14-dependent regulation of COX1 translation to early steps of cytochrome c oxidase assembly. In Saccharomyces cerevisiae (strain ATCC 204508 / S288c) (Baker's yeast), this protein is Cytochrome oxidase assembly protein SHY1 (SHY1).